Consider the following 429-residue polypeptide: Enolase (429 aa).

Glutamine 163 serves as a coordination point for (2R)-2-phosphoglycerate. Residue glutamate 205 is the Proton donor of the active site. Mg(2+)-binding residues include aspartate 242, glutamate 287, and aspartate 314. Positions 339, 368, 369, and 390 each coordinate (2R)-2-phosphoglycerate. Residue lysine 339 is the Proton acceptor of the active site.

It belongs to the enolase family. Mg(2+) serves as cofactor.

The protein resides in the cytoplasm. It localises to the secreted. Its subcellular location is the cell surface. The catalysed reaction is (2R)-2-phosphoglycerate = phosphoenolpyruvate + H2O. It participates in carbohydrate degradation; glycolysis; pyruvate from D-glyceraldehyde 3-phosphate: step 4/5. Catalyzes the reversible conversion of 2-phosphoglycerate (2-PG) into phosphoenolpyruvate (PEP). It is essential for the degradation of carbohydrates via glycolysis. The chain is Enolase from Salinibacter ruber (strain DSM 13855 / M31).